The sequence spans 152 residues: MVLKAVCVLRGAGETTGTVYFEQEGNANAVGKGIILKGLTPGEHGFHVHGFGDNTNGCISAGPHFNPASKKHAGPKDEDRHVGDLGNVTADANGVAKIDITDKISLTGPYSIIGRTMVIHEKADDLGRGGNEESLKTGNAGSRLACGVIGTE.

The S-palmitoyl cysteine moiety is linked to residue Cys7. Residues His47, His49, and His64 each coordinate Cu cation. Cys58 and Cys146 are joined by a disulfide. Residues His64, His72, His81, and Asp84 each contribute to the Zn(2+) site. Position 120 (His120) interacts with Cu cation.

It belongs to the Cu-Zn superoxide dismutase family. In terms of assembly, homodimer. It depends on Cu cation as a cofactor. Zn(2+) serves as cofactor.

Its subcellular location is the cytoplasm. It localises to the nucleus. It catalyses the reaction 2 superoxide + 2 H(+) = H2O2 + O2. Destroys radicals which are normally produced within the cells and which are toxic to biological systems. The polypeptide is Superoxide dismutase [Cu-Zn] (sod1) (Xiphias gladius (Swordfish)).